We begin with the raw amino-acid sequence, 109 residues long: Protein phosphatase 1 regulatory subunit 1C (109 aa).

Residues 25-109 (AEQIRKRRPT…TNEREEQRDH (85 aa)) are disordered. Basic and acidic residues predominate over residues 45 to 54 (NPPEIDDKRG). A compositionally biased stretch (polar residues) spans 55–75 (PNTQGELQNASPKQRKQSVYT). Residues 100 to 109 (TNEREEQRDH) are compositionally biased toward basic and acidic residues.

The protein belongs to the protein phosphatase inhibitor 1 family.

The protein localises to the cytoplasm. In terms of biological role, may increase cell susceptibility to TNF-induced apoptosis. The chain is Protein phosphatase 1 regulatory subunit 1C (PPP1R1C) from Homo sapiens (Human).